Consider the following 217-residue polypeptide: Adapter protein MecA (217 aa).

It belongs to the MecA family. As to quaternary structure, homodimer.

Functionally, enables the recognition and targeting of unfolded and aggregated proteins to the ClpC protease or to other proteins involved in proteolysis. Acts negatively in the development of competence by binding ComK and recruiting it to the ClpCP protease. When overexpressed, inhibits sporulation. Also involved in Spx degradation by ClpC. This is Adapter protein MecA from Alkalihalophilus pseudofirmus (strain ATCC BAA-2126 / JCM 17055 / OF4) (Bacillus pseudofirmus).